Reading from the N-terminus, the 291-residue chain is Ribosomal RNA small subunit methyltransferase A (291 aa).

S-adenosyl-L-methionine contacts are provided by His21, Leu23, Gly48, Glu70, Asp95, and Asn115.

This sequence belongs to the class I-like SAM-binding methyltransferase superfamily. rRNA adenine N(6)-methyltransferase family. RsmA subfamily.

It is found in the cytoplasm. The catalysed reaction is adenosine(1518)/adenosine(1519) in 16S rRNA + 4 S-adenosyl-L-methionine = N(6)-dimethyladenosine(1518)/N(6)-dimethyladenosine(1519) in 16S rRNA + 4 S-adenosyl-L-homocysteine + 4 H(+). In terms of biological role, specifically dimethylates two adjacent adenosines (A1518 and A1519) in the loop of a conserved hairpin near the 3'-end of 16S rRNA in the 30S particle. May play a critical role in biogenesis of 30S subunits. The sequence is that of Ribosomal RNA small subunit methyltransferase A from Prochlorococcus marinus (strain NATL1A).